A 343-amino-acid polypeptide reads, in one-letter code: S-adenosylmethionine:tRNA ribosyltransferase-isomerase (343 aa).

This sequence belongs to the QueA family. As to quaternary structure, monomer.

It localises to the cytoplasm. It carries out the reaction 7-aminomethyl-7-carbaguanosine(34) in tRNA + S-adenosyl-L-methionine = epoxyqueuosine(34) in tRNA + adenine + L-methionine + 2 H(+). It functions in the pathway tRNA modification; tRNA-queuosine biosynthesis. Functionally, transfers and isomerizes the ribose moiety from AdoMet to the 7-aminomethyl group of 7-deazaguanine (preQ1-tRNA) to give epoxyqueuosine (oQ-tRNA). The polypeptide is S-adenosylmethionine:tRNA ribosyltransferase-isomerase (Enterococcus faecalis (strain ATCC 700802 / V583)).